A 268-amino-acid polypeptide reads, in one-letter code: Ethylene-responsive transcription factor ERN1 (268 aa).

The span at 1-21 shows a compositional bias: polar residues; the sequence is MEIQFQQPNMQNQKAGISVTN. The disordered stretch occupies residues 1 to 36; that stretch reads MEIQFQQPNMQNQKAGISVTNKGGKFKGRNRNSNNT. Residues 38–95 constitute a DNA-binding region (AP2/ERF); sequence KFVGVRQRPSGRWVAEIKDTTQKIRMWLGTFETAEEAARAYDEAACLLRGSNTRTNFI. The interval 114–154 is disordered; it reads NRKGDKKQEDGAVASAPSNSKTTISNTSTITSNDDNKESTL. The segment covering 131–146 has biased composition (low complexity); the sequence is SNSKTTISNTSTITSN.

It belongs to the AP2/ERF transcription factor family. ERF subfamily. In terms of tissue distribution, expressed in roots, root hairs and leaves. Expressed in root epidermis and root hairs.

It is found in the nucleus. Its function is as follows. Transcription factor involved in symbiotic nodule signaling in response to rhizobial Nod factors (NFs). Binds to the GCC-box (NF-responsive box) of ENOD11 promoter. Acts as a transcriptional activator of NF-responsive box-containing target gene promoters in root hairs. Functions as a transcriptional regulator required for root infection by symbiotic rhizobia, infection thread (IT) formation and maintenance, and nodule development. Necessary for NF-induced gene expression and spontaneous nodulation activated by CCAMK. Functions downstream of CCAMK to activate nodulation gene expression. Involved in early stages of root nodule development. Functions redundantly with ERN2. Is essential with ERN2 for the initiation of root hair infection, and nodule organogenesis and development. Required for accurate expression of the NF signaling genes ENOD11 and ENOD12. In Medicago truncatula (Barrel medic), this protein is Ethylene-responsive transcription factor ERN1.